A 221-amino-acid polypeptide reads, in one-letter code: ATP phosphoribosyltransferase (221 aa).

This sequence belongs to the ATP phosphoribosyltransferase family. Short subfamily. As to quaternary structure, heteromultimer composed of HisG and HisZ subunits.

It localises to the cytoplasm. The enzyme catalyses 1-(5-phospho-beta-D-ribosyl)-ATP + diphosphate = 5-phospho-alpha-D-ribose 1-diphosphate + ATP. Its pathway is amino-acid biosynthesis; L-histidine biosynthesis; L-histidine from 5-phospho-alpha-D-ribose 1-diphosphate: step 1/9. In terms of biological role, catalyzes the condensation of ATP and 5-phosphoribose 1-diphosphate to form N'-(5'-phosphoribosyl)-ATP (PR-ATP). Has a crucial role in the pathway because the rate of histidine biosynthesis seems to be controlled primarily by regulation of HisG enzymatic activity. This chain is ATP phosphoribosyltransferase, found in Symbiobacterium thermophilum (strain DSM 24528 / JCM 14929 / IAM 14863 / T).